We begin with the raw amino-acid sequence, 216 residues long: Dimethylamine corrinoid protein 1 (216 aa).

The 91-residue stretch at M1–K91 folds into the B12-binding N-terminal domain. The B12-binding domain maps to L92–K216. H105 is a methylcob(III)alamin binding site.

This sequence belongs to the methylamine corrinoid protein family.

The protein operates within one-carbon metabolism; methanogenesis from dimethylamine. Acts as a methyl group carrier between MtbB and MtbA. The polypeptide is Dimethylamine corrinoid protein 1 (mtbC1) (Methanosarcina mazei (strain ATCC BAA-159 / DSM 3647 / Goe1 / Go1 / JCM 11833 / OCM 88) (Methanosarcina frisia)).